A 467-amino-acid polypeptide reads, in one-letter code: Retinoic acid receptor RXR-alpha (467 aa).

The interval 1 to 61 is disordered; it reads MDTKHFLPLD…LHSPISTLSS (61 aa). The tract at residues 1-139 is modulating; it reads MDTKHFLPLD…GNMSSFTKHI (139 aa). A Glycyl lysine isopeptide (Lys-Gly) (interchain with G-Cter in SUMO2) cross-link involves residue K4. S22 and S28 each carry phosphoserine. The segment covering 32–55 has biased composition (low complexity); sequence PSLHPSLGPGLGSPLGSPGQLHSP. S61 and S75 each carry phosphoserine; by MAPK8 and MAPK9. The tract at residues 79–109 is disordered; the sequence is PHSMSVPTTPTLGFETGSPQLNSPMNPVSSS. Residues 83–109 show a composition bias toward polar residues; sequence SVPTTPTLGFETGSPQLNSPMNPVSSS. T87 is subject to Phosphothreonine; by MAPK8 and MAPK9. K113 participates in a covalent cross-link: Glycyl lysine isopeptide (Lys-Gly) (interchain with G-Cter in SUMO). S134 is subject to Phosphoserine. 2 residues coordinate Zn(2+): C140 and C143. Residues 140–160 form an NR C4-type zinc finger; the sequence is CAICGDRSSGKHYGVYSCEGC. A DNA-binding region (nuclear receptor) is located at residues 140 to 205; that stretch reads CAICGDRSSG…RYQKCLAMGM (66 aa). K150 is subject to N6-acetyllysine. Positions 157 and 160 each coordinate Zn(2+). A nuclear localization signal region spans residues 165 to 170; the sequence is KRTVRK. 4 residues coordinate Zn(2+): C176, C182, C192, and C195. The NR C4-type zinc-finger motif lies at 176-200; it reads CRDNKDCLIDKRQRNRCQYCRYQKC. The interval 206 to 229 is hinge; it reads KREAVQEERQRGKDRNENEVESTS. Residues 211 to 223 are compositionally biased toward basic and acidic residues; sequence QEERQRGKDRNEN. The interval 211 to 233 is disordered; the sequence is QEERQRGKDRNENEVESTSSANE. An NR LBD domain is found at 232–463; sequence NEDMPVEKIL…TFLMEMLEAP (232 aa). S264 is modified (phosphoserine). S265 bears the Phosphoserine; by MAPK8 and MAPK9 mark. 2 residues coordinate 9-cis-retinoate: R321 and A332. R321 and A332 together coordinate all-trans-retinoate. Positions 353–373 are required for nuclear export; it reads RVLTELVSKMRDMQMDKTELG.

The protein belongs to the nuclear hormone receptor family. NR2 subfamily. As to quaternary structure, homodimer. Heterodimer (via C-terminus) with RARA; required for ligand-dependent retinoic acid receptor transcriptional activity; association with RARA is enhanced by pulsatile shear stress. Heterodimer with PPARA (via the leucine-like zipper in the LBD); the interaction is required for PPARA transcriptional activity. Heterodimerizes with PPARG. Heterodimerizes (via NR LBD) with RARB. Heterodimerizes with NR1H4; the heterodimerization enhances the binding affinity for LXXLL motifs from coactivators. Interacts with NCOA3 and NCOA6 coactivators. Interacts with FAM120B. Interacts with coactivator PELP1, SENP6, SFPQ, DNTTIP2 and RNF8. Interacts with PRMT2. Interacts with ASXL1. Interacts with BHLHE40/DEC1, BHLHE41/DEC2, MED1, NCOR1 and NCOR2. Interacts in a ligand-dependent fashion with MED1 and NCOA1. Interacts with VDR. Interacts with EP300; the interaction is decreased by 9-cis retinoic acid. Heterodimer (via C-terminus) with NR4A1 (DNA-binding domain); the interaction is enhanced by 9-cis retinoic acid. NR4A1 competes with EP300 for interaction with RXRA and thereby attenuates EP300 mediated acetylation of RXRA. In the absence of hormonal ligand, interacts with TACC1. Interacts ith IGFBP3. Phosphorylated on serine and threonine residues mainly in the N-terminal modulating domain. Constitutively phosphorylated on Ser-22 in the presence or absence of ligand. Under stress conditions, hyperphosphorylated by activated JNK on Ser-61, Ser-75, Thr-87 and Ser-265. Phosphorylated on Ser-28, in vitro, by PKA. This phosphorylation is required for repression of cAMP-mediated transcriptional activity of RARA. Post-translationally, ubiquitinated by UBR5, leading to its degradation: UBR5 specifically recognizes and binds ligand-bound RXRA when it is not associated with coactivators (NCOAs). In presence of NCOAs, the UBR5-degron is not accessible, preventing its ubiquitination and degradation. In terms of processing, sumoylation negatively regulates transcriptional activity. Desumoylated specifically by SENP6. Acetylated by EP300; acetylation enhances DNA binding and transcriptional activity. As to expression, expressed in the adrenal gland with main expression in the zona fasciculata and medulla (at protein level). Expressed in aortic endothelial cells, with high expression in the descending thoracic aorta and the outer curvature of the aortic arch, where pulsatory shear stress exists, but very low in the inner curvature of the aortic arch, where oscillatory shear stress prevails (at protein level).

It localises to the nucleus. The protein resides in the cytoplasm. It is found in the mitochondrion. Receptor for retinoic acid that acts as a transcription factor. Forms homo- or heterodimers with retinoic acid receptors (RARs) and binds to target response elements in response to their ligands, all-trans or 9-cis retinoic acid, to regulate gene expression in various biological processes. The RAR/RXR heterodimers bind to the retinoic acid response elements (RARE) composed of tandem 5'-AGGTCA-3' sites known as DR1-DR5 to regulate transcription. The high affinity ligand for retinoid X receptors (RXRs) is 9-cis retinoic acid. In the absence of ligand, the RXR-RAR heterodimers associate with a multiprotein complex containing transcription corepressors that induce histone deacetylation, chromatin condensation and transcriptional suppression. On ligand binding, the corepressors dissociate from the receptors and coactivators are recruited leading to transcriptional activation. Serves as a common heterodimeric partner for a number of nuclear receptors, such as RARA, RARB and PPARA. The RXRA/RARB heterodimer can act as a transcriptional repressor or transcriptional activator, depending on the RARE DNA element context. The RXRA/PPARA heterodimer is required for PPARA transcriptional activity on fatty acid oxidation genes such as ACOX1 and the P450 system genes. Together with RARA, positively regulates microRNA-10a expression, thereby inhibiting the GATA6/VCAM1 signaling response to pulsatile shear stress in vascular endothelial cells. Acts as an enhancer of RARA binding to RARE DNA element. May facilitate the nuclear import of heterodimerization partners such as VDR and NR4A1. Promotes myelin debris phagocytosis and remyelination by macrophages. Plays a role in the attenuation of the innate immune system in response to viral infections, possibly by negatively regulating the transcription of antiviral genes such as type I IFN genes. Involved in the regulation of calcium signaling by repressing ITPR2 gene expression, thereby controlling cellular senescence. This is Retinoic acid receptor RXR-alpha (Rxra) from Rattus norvegicus (Rat).